The chain runs to 430 residues: Adenylosuccinate synthetase (430 aa).

GTP is bound by residues 12–18 and 40–42; these read GDEGKGK and GHT. Asp-13 serves as the catalytic Proton acceptor. Positions 13 and 40 each coordinate Mg(2+). IMP contacts are provided by residues 13–16, 38–41, Thr-129, Arg-143, Gln-224, Thr-239, and Arg-303; these read DEGK and NAGH. Residue His-41 is the Proton donor of the active site. 299–305 contributes to the substrate binding site; it reads ATTGRRR. Residues Arg-305, 331–333, and 413–415 contribute to the GTP site; these read KLD and SVG.

This sequence belongs to the adenylosuccinate synthetase family. Homodimer. Mg(2+) serves as cofactor.

Its subcellular location is the cytoplasm. The catalysed reaction is IMP + L-aspartate + GTP = N(6)-(1,2-dicarboxyethyl)-AMP + GDP + phosphate + 2 H(+). The protein operates within purine metabolism; AMP biosynthesis via de novo pathway; AMP from IMP: step 1/2. Functionally, plays an important role in the de novo pathway of purine nucleotide biosynthesis. Catalyzes the first committed step in the biosynthesis of AMP from IMP. The polypeptide is Adenylosuccinate synthetase (Desulfatibacillum aliphaticivorans).